The chain runs to 115 residues: MMSANTVAKVMIIMLAVCLLTQTDGKPVRKRAVSEIQLMHNLGKHLASMERMQWLRRKLQDMHNFVSLGVQMAARDGSHQKPTKKEENVLVDGNPKSLGEGDKADVDVLVKSKSQ.

A signal peptide spans 1–25 (MMSANTVAKVMIIMLAVCLLTQTDG). Positions 26–31 (KPVRKR) are excised as a propeptide. The interval 51–69 (RMQWLRRKLQDMHNFVSLG) is important for receptor binding.

Belongs to the parathyroid hormone family. In terms of assembly, interacts with PTH1R (via N-terminal extracellular domain). In terms of tissue distribution, highly expressed in the parathyroid gland. Also expressed in the placenta, thymus and testis.

The protein localises to the secreted. In terms of biological role, parathyroid hormone elevates calcium level by dissolving the salts in bone and preventing their renal excretion. Acts by binding to its receptor, PTH1R, activating G protein-coupled receptor signaling. Stimulates [1-14C]-2-deoxy-D-glucose (2DG) transport and glycogen synthesis in osteoblastic cells. The sequence is that of Parathyroid hormone from Mus musculus (Mouse).